The chain runs to 504 residues: ATP synthase subunit alpha (504 aa).

ATP is bound at residue glycine 169 to threonine 176.

This sequence belongs to the ATPase alpha/beta chains family. F-type ATPases have 2 components, CF(1) - the catalytic core - and CF(0) - the membrane proton channel. CF(1) has five subunits: alpha(3), beta(3), gamma(1), delta(1), epsilon(1). CF(0) has three main subunits: a(1), b(2) and c(9-12). The alpha and beta chains form an alternating ring which encloses part of the gamma chain. CF(1) is attached to CF(0) by a central stalk formed by the gamma and epsilon chains, while a peripheral stalk is formed by the delta and b chains.

The protein resides in the cell membrane. The catalysed reaction is ATP + H2O + 4 H(+)(in) = ADP + phosphate + 5 H(+)(out). Produces ATP from ADP in the presence of a proton gradient across the membrane. The alpha chain is a regulatory subunit. The sequence is that of ATP synthase subunit alpha from Clostridium kluyveri (strain NBRC 12016).